The chain runs to 761 residues: Disintegrin and metalloproteinase domain-containing protein 24 (761 aa).

A signal peptide spans 1–34 (MVAMSEALVHARITLLQAWLRMLLFSSVWPPTWC). Residues 35–200 (AEYKGPPETV…GKSTRMQSIY (166 aa)) constitute a propeptide that is removed on maturation. Residues 35–697 (AEYKGPPETV…SKKDAPEKPN (663 aa)) lie on the Extracellular side of the membrane. A glycan (N-linked (GlcNAc...) asparagine) is linked at Asn-140. The Cysteine switch motif lies at 172-179 (MRCGLTDE). A Zn(2+)-binding site is contributed by Cys-174. The 193-residue stretch at 208–400 (LYIKLALVID…KSCIHREPRP (193 aa)) folds into the Peptidase M12B domain. Asn-227 and Asn-301 each carry an N-linked (GlcNAc...) asparagine glycan. 7 disulfide bridges follow: Cys-323–Cys-393, Cys-357–Cys-379, Cys-359–Cys-364, Cys-465–Cys-485, Cys-635–Cys-646, Cys-640–Cys-652, and Cys-654–Cys-663. His-342 contacts Zn(2+). Glu-343 is an active-site residue. The Zn(2+) site is built by His-346 and His-352. Asn-378, Asn-390, and Asn-479 each carry an N-linked (GlcNAc...) asparagine glycan. Residues 406–493 (LKVCGNGIVE…ECPEDLFVQD (88 aa)) form the Disintegrin domain. Positions 631–664 (WVNDCTPETCNMKGVCNNKQHCHCDVGWSPPNCQ) constitute an EGF-like domain. Residues 698–718 (VIIWLLPIICVAVVLSVLFCL) form a helical membrane-spanning segment. Topologically, residues 719–761 (SGATKKSREAAASQPAEERVKPPYEGAEPSYETVKPPDEWANP) are cytoplasmic. The tract at residues 725-761 (SREAAASQPAEERVKPPYEGAEPSYETVKPPDEWANP) is disordered.

In terms of assembly, monomer. Zn(2+) serves as cofactor. In terms of processing, the prodomain is removed during sperm passage through the caput epididymis after the protein has reached the cell surface. Not processed in the secretory pathway. Expressed exclusively in testis and more specifically on the surface of mature sperm (at protein level).

It localises to the membrane. Functionally, plasma membrane protease present on mature sperm that may be involved in sperm function during epididymal maturation and/or fertilization. The polypeptide is Disintegrin and metalloproteinase domain-containing protein 24 (Mus musculus (Mouse)).